A 23-amino-acid polypeptide reads, in one-letter code: Retinol-binding protein 3 (23 aa).

It localises to the secreted. Its subcellular location is the extracellular space. The protein localises to the extracellular matrix. The protein resides in the interphotoreceptor matrix. Functionally, IRBP shuttles 11-cis and all trans retinoids between the retinol isomerase in the pigment epithelium and the visual pigments in the photoreceptor cells of the retina. This is Retinol-binding protein 3 (RBP3) from Oryctolagus cuniculus (Rabbit).